A 196-amino-acid chain; its full sequence is uncharacterized protein (196 aa).

This is an uncharacterized protein from Saccharolobus islandicus (Sulfolobus islandicus).